The following is a 62-amino-acid chain: MRDDTTTLRIQKELKKKFEELCESEELPLIKCANLLVSEALTRGYIIKERHELFEKLKKNNA.

This is an uncharacterized protein from Acidianus filamentous virus 2 (isolate Italy/Pozzuoli) (AFV-2).